A 290-amino-acid polypeptide reads, in one-letter code: Probable protein phosphatase 2C 20 (290 aa).

A PPM-type phosphatase domain is found at 31-278; that stretch reads AHGYDFVKGK…DDISCIVPCF (248 aa). Mn(2+)-binding residues include Asp68, Gly69, Asp230, and Asp269.

Belongs to the PP2C family. Mg(2+) serves as cofactor. It depends on Mn(2+) as a cofactor.

The catalysed reaction is O-phospho-L-seryl-[protein] + H2O = L-seryl-[protein] + phosphate. It catalyses the reaction O-phospho-L-threonyl-[protein] + H2O = L-threonyl-[protein] + phosphate. Its function is as follows. May be involved in defense signaling. This is Probable protein phosphatase 2C 20 (PPC3-1.2) from Arabidopsis thaliana (Mouse-ear cress).